We begin with the raw amino-acid sequence, 184 residues long: MNWRSERIWIELITGSRKTSNFCWACILFLGSIGFLLVGISSYLGRNLISLFPSQQILFFPQGIVMCFYGIAGLFISSYLWCTISWNVGSGYDRFDRKEGIVCIFRWGFPGINRRIFLRFRMRDIRSIRMKVKEGLYPRRVLYMEIRGRGDIPLTRTDENLSPLEIEQKAAEWAYFLRVPIEVF.

Transmembrane regions (helical) follow at residues 22 to 42 (FCWACILFLGSIGFLLVGISS) and 57 to 77 (ILFFPQGIVMCFYGIAGLFIS).

This sequence belongs to the Ycf4 family.

The protein localises to the plastid. Its subcellular location is the chloroplast thylakoid membrane. Seems to be required for the assembly of the photosystem I complex. The polypeptide is Photosystem I assembly protein Ycf4 (Illicium oligandrum (Star anise)).